The following is a 454-amino-acid chain: tRNA modification GTPase MnmE (454 aa).

(6S)-5-formyl-5,6,7,8-tetrahydrofolate contacts are provided by R23, E80, and K120. The TrmE-type G domain occupies 216–377; it reads TIKIVIAGPP…LKNKILEITT (162 aa). Position 226 (N226) interacts with K(+). GTP is bound by residues 226-231, 245-251, and 270-273; these read NVGKSS, TNIPGTT, and DTAG. Position 230 (S230) interacts with Mg(2+). 3 residues coordinate K(+): T245, I247, and T250. Residue T251 coordinates Mg(2+). A (6S)-5-formyl-5,6,7,8-tetrahydrofolate-binding site is contributed by K454.

This sequence belongs to the TRAFAC class TrmE-Era-EngA-EngB-Septin-like GTPase superfamily. TrmE GTPase family. Homodimer. Heterotetramer of two MnmE and two MnmG subunits. K(+) serves as cofactor.

The protein resides in the cytoplasm. Exhibits a very high intrinsic GTPase hydrolysis rate. Involved in the addition of a carboxymethylaminomethyl (cmnm) group at the wobble position (U34) of certain tRNAs, forming tRNA-cmnm(5)s(2)U34. This chain is tRNA modification GTPase MnmE, found in Buchnera aphidicola subsp. Cinara cedri (strain Cc).